The primary structure comprises 459 residues: Argininosuccinate lyase (459 aa).

It belongs to the lyase 1 family. Argininosuccinate lyase subfamily.

It localises to the cytoplasm. It catalyses the reaction 2-(N(omega)-L-arginino)succinate = fumarate + L-arginine. It functions in the pathway amino-acid biosynthesis; L-arginine biosynthesis; L-arginine from L-ornithine and carbamoyl phosphate: step 3/3. The protein is Argininosuccinate lyase of Oceanobacillus iheyensis (strain DSM 14371 / CIP 107618 / JCM 11309 / KCTC 3954 / HTE831).